The sequence spans 352 residues: Phosphoribosylformylglycinamidine cyclo-ligase (352 aa).

Belongs to the AIR synthase family.

Its subcellular location is the cytoplasm. The catalysed reaction is 2-formamido-N(1)-(5-O-phospho-beta-D-ribosyl)acetamidine + ATP = 5-amino-1-(5-phospho-beta-D-ribosyl)imidazole + ADP + phosphate + H(+). The protein operates within purine metabolism; IMP biosynthesis via de novo pathway; 5-amino-1-(5-phospho-D-ribosyl)imidazole from N(2)-formyl-N(1)-(5-phospho-D-ribosyl)glycinamide: step 2/2. In Pseudomonas putida (strain W619), this protein is Phosphoribosylformylglycinamidine cyclo-ligase.